Here is a 295-residue protein sequence, read N- to C-terminus: Tyrosine recombinase XerC (295 aa).

One can recognise a Core-binding (CB) domain in the interval 1–85 (MLTALNRYWD…ALRRFLSFLV (85 aa)). The 180-residue stretch at 106–285 (HLPKNMDGEQ…NFQHLAEVYD (180 aa)) folds into the Tyr recombinase domain. Active-site residues include Arg145, Lys169, His237, Arg240, and His263. The active-site O-(3'-phospho-DNA)-tyrosine intermediate is Tyr272.

The protein belongs to the 'phage' integrase family. XerC subfamily. As to quaternary structure, forms a cyclic heterotetrameric complex composed of two molecules of XerC and two molecules of XerD.

The protein localises to the cytoplasm. Site-specific tyrosine recombinase, which acts by catalyzing the cutting and rejoining of the recombining DNA molecules. The XerC-XerD complex is essential to convert dimers of the bacterial chromosome into monomers to permit their segregation at cell division. It also contributes to the segregational stability of plasmids. This Haemophilus influenzae (strain 86-028NP) protein is Tyrosine recombinase XerC.